The chain runs to 209 residues: Small ribosomal subunit protein uS5 (209 aa).

The S5 DRBM domain occupies 48-111 (LEDEVLDINM…DAAKLNITYI (64 aa)).

The protein belongs to the universal ribosomal protein uS5 family. In terms of assembly, part of the 30S ribosomal subunit. Contacts protein S4.

Its function is as follows. With S4 and S12 plays an important role in translational accuracy. This chain is Small ribosomal subunit protein uS5, found in Methanosarcina mazei (strain ATCC BAA-159 / DSM 3647 / Goe1 / Go1 / JCM 11833 / OCM 88) (Methanosarcina frisia).